Consider the following 354-residue polypeptide: 3-dehydroquinate synthase (354 aa).

NAD(+) is bound by residues 106–110 (GVIGD), 130–131 (TS), Lys143, and Lys152. Positions 185, 246, and 262 each coordinate Zn(2+).

The protein belongs to the sugar phosphate cyclases superfamily. Dehydroquinate synthase family. Co(2+) is required as a cofactor. It depends on Zn(2+) as a cofactor. The cofactor is NAD(+).

The protein localises to the cytoplasm. The enzyme catalyses 7-phospho-2-dehydro-3-deoxy-D-arabino-heptonate = 3-dehydroquinate + phosphate. It participates in metabolic intermediate biosynthesis; chorismate biosynthesis; chorismate from D-erythrose 4-phosphate and phosphoenolpyruvate: step 2/7. Functionally, catalyzes the conversion of 3-deoxy-D-arabino-heptulosonate 7-phosphate (DAHP) to dehydroquinate (DHQ). The polypeptide is 3-dehydroquinate synthase (Leuconostoc mesenteroides subsp. mesenteroides (strain ATCC 8293 / DSM 20343 / BCRC 11652 / CCM 1803 / JCM 6124 / NCDO 523 / NBRC 100496 / NCIMB 8023 / NCTC 12954 / NRRL B-1118 / 37Y)).